Here is a 139-residue protein sequence, read N- to C-terminus: Putative pre-16S rRNA nuclease (139 aa).

Belongs to the YqgF nuclease family.

It localises to the cytoplasm. Functionally, could be a nuclease involved in processing of the 5'-end of pre-16S rRNA. In Caldanaerobacter subterraneus subsp. tengcongensis (strain DSM 15242 / JCM 11007 / NBRC 100824 / MB4) (Thermoanaerobacter tengcongensis), this protein is Putative pre-16S rRNA nuclease.